The sequence spans 117 residues: Large ribosomal subunit protein eL34 (117 aa).

It belongs to the eukaryotic ribosomal protein eL34 family. In terms of assembly, component of the large ribosomal subunit.

It localises to the cytoplasm. Its subcellular location is the cytosol. It is found in the endoplasmic reticulum. Functionally, component of the large ribosomal subunit. The ribosome is a large ribonucleoprotein complex responsible for the synthesis of proteins in the cell. The sequence is that of Large ribosomal subunit protein eL34 (rpl34) from Danio rerio (Zebrafish).